Here is a 319-residue protein sequence, read N- to C-terminus: Serpentine receptor class X-43 (319 aa).

The next 7 membrane-spanning stretches (helical) occupy residues 28–48 (VVSM…IGCF), 67–87 (AQLM…LLNI), 95–115 (YLFG…FLLM), 138–158 (IRTF…YLVV), 164–184 (FVFY…CGTL), 194–214 (TVLS…LMAF), and 267–287 (FFFT…VVVF).

Belongs to the G-protein coupled receptor 1 family. As to expression, expressed in ASI sensory neurons.

The protein resides in the cell membrane. It localises to the perikaryon. It is found in the cell projection. The protein localises to the cilium. Functionally, receptor for the ascaroside pheromone icas#9 which suppresses exploratory forgaging behavior. In response to ascaroside icas#9, may furthermore play a role in the expression of genes in the TGF-beta signaling pathway, such as daf-7, and in insulin signaling pathway, such as daf-28, which may in turn contribute to exploratory behavior. This Caenorhabditis elegans protein is Serpentine receptor class X-43.